The chain runs to 307 residues: Dioxygenase swnH1 (307 aa).

3 residues coordinate Fe cation: H149, D151, and H227.

Belongs to the PhyH family. Homodimer. Fe cation is required as a cofactor.

Its pathway is mycotoxin biosynthesis. Its function is as follows. Dioxygenase; part of the gene cluster that mediates the biosynthesis of swainsonine (SW), a cytotoxic fungal alkaloid and a potential cancer therapy drug. Swainsonine production occurs via a multibranched pathway and is dispensable for fungal colonization of plants and infection of insect hosts. The first step of swainsonine biosynthesis is the production of the precursor pipecolic acid (PA) via conversion of L-lysine (Lys) to 1-piperideine-6-carboxylate (P6C) by the aminotransferase swnA, the latter being further reduced to PA by the reductase swnR. PA can be converted from lysine by both the SW biosynthetic cluster and the unclustered genes such as lysine cyclodeaminase. The PKS-NRPS hybrid synthetase swnK uptakes and condensates PA and malonyl-CoA with and without skipping of the ketoreductase (KR) domain in order to produce 3 intermediates, 1-oxoindolizidine, (1S)-1-hydroxyindolizin, and (1R)-1-hydroxyindolizine; with the transisomer (1S)-1-hydroxyindolizin being predominant. The terminal thioester reductase (TE) domain of swnK is involved in reduction of the thioester bond to release the intermediate aldehydes. The oxidoreductase swnN could contribute to the reduction of 1-oxoindolizidine to (1S)-1-hydroxyindolizin and (1R)-1-hydroxyindolizine, contributing to the major route of SW production. The dioxygenase swnH2 would be responsible for the oxidization of (1R)-1-hydroxyindolizine into (1R,2S)-1,2-dihydroxyindolizine and of (1S)-1-hydroxyindolizin to yield both (1R,2S)-1,2-dihydroxyindolizine and (1S,2S)-1,2-dihydroxyindolizine. The dioxygenase swnH1 then performs the conversion of the 1,2-dihydroxyindolizine epimers to SW. The sequence is that of Dioxygenase swnH1 from Metarhizium robertsii (strain ARSEF 23 / ATCC MYA-3075) (Metarhizium anisopliae (strain ARSEF 23)).